The primary structure comprises 543 residues: Periplasmic oligopeptide-binding protein OppA (543 aa).

An N-terminal signal peptide occupies residues 1 to 26; that stretch reads MTNITKRSLVAAGVLAALMAGNVALA. C297 and C443 form a disulfide bridge.

This sequence belongs to the bacterial solute-binding protein 5 family. The complex is composed of two ATP-binding proteins (OppD and OppF), two transmembrane proteins (OppB and OppC) and a solute-binding protein (OppA).

It is found in the periplasm. In terms of biological role, part of the ABC transporter complex OppABCDF involved in the uptake of oligopeptides. Plays an important nutritional role. Binds peptides containing from two to five amino acid residues. Displays a preference for tripeptides and tetrapeptides over dipeptides and pentapeptides, for peptides composed of L-amino acids and for positively charged peptides. Cannot bind the cell wall peptide L-Ala-D-Gly-gamma-meso-diaminopimelic acid. The chain is Periplasmic oligopeptide-binding protein OppA from Escherichia coli (strain K12).